The chain runs to 94 residues: PqqA binding protein (94 aa).

Belongs to the PqqD family. As to quaternary structure, monomer. Interacts with PqqE.

The protein operates within cofactor biosynthesis; pyrroloquinoline quinone biosynthesis. Functions as a PqqA binding protein and presents PqqA to PqqE, in the pyrroloquinoline quinone (PQQ) biosynthetic pathway. The protein is PqqA binding protein of Pseudomonas savastanoi pv. phaseolicola (strain 1448A / Race 6) (Pseudomonas syringae pv. phaseolicola (strain 1448A / Race 6)).